Reading from the N-terminus, the 134-residue chain is Small ribosomal subunit protein uS8c (134 aa).

This sequence belongs to the universal ribosomal protein uS8 family. As to quaternary structure, part of the 30S ribosomal subunit.

It localises to the plastid. The protein localises to the chloroplast. One of the primary rRNA binding proteins, it binds directly to 16S rRNA central domain where it helps coordinate assembly of the platform of the 30S subunit. In Arabidopsis thaliana (Mouse-ear cress), this protein is Small ribosomal subunit protein uS8c (rps8).